We begin with the raw amino-acid sequence, 227 residues long: ATP-dependent dethiobiotin synthetase BioD (227 aa).

13–18 lines the ATP pocket; that stretch reads DIGKTY. Residue Thr-17 participates in Mg(2+) binding. Residue Lys-38 is part of the active site. Residue Ser-42 participates in substrate binding. Residues Asp-55, 116 to 119, and 179 to 180 contribute to the ATP site; these read EGSG and NN. The Mg(2+) site is built by Asp-55 and Glu-116.

It belongs to the dethiobiotin synthetase family. Homodimer. Requires Mg(2+) as cofactor.

Its subcellular location is the cytoplasm. The enzyme catalyses (7R,8S)-7,8-diammoniononanoate + CO2 + ATP = (4R,5S)-dethiobiotin + ADP + phosphate + 3 H(+). It functions in the pathway cofactor biosynthesis; biotin biosynthesis; biotin from 7,8-diaminononanoate: step 1/2. Its function is as follows. Catalyzes a mechanistically unusual reaction, the ATP-dependent insertion of CO2 between the N7 and N8 nitrogen atoms of 7,8-diaminopelargonic acid (DAPA, also called 7,8-diammoniononanoate) to form a ureido ring. The chain is ATP-dependent dethiobiotin synthetase BioD from Clostridium botulinum (strain 657 / Type Ba4).